Reading from the N-terminus, the 325-residue chain is ATP phosphoribosyltransferase (325 aa).

The protein belongs to the ATP phosphoribosyltransferase family. Long subfamily. Mg(2+) is required as a cofactor.

The protein resides in the cytoplasm. It catalyses the reaction 1-(5-phospho-beta-D-ribosyl)-ATP + diphosphate = 5-phospho-alpha-D-ribose 1-diphosphate + ATP. The protein operates within amino-acid biosynthesis; L-histidine biosynthesis; L-histidine from 5-phospho-alpha-D-ribose 1-diphosphate: step 1/9. With respect to regulation, feedback inhibited by histidine. In terms of biological role, catalyzes the condensation of ATP and 5-phosphoribose 1-diphosphate to form N'-(5'-phosphoribosyl)-ATP (PR-ATP). Has a crucial role in the pathway because the rate of histidine biosynthesis seems to be controlled primarily by regulation of HisG enzymatic activity. The protein is ATP phosphoribosyltransferase of Rhodopseudomonas palustris (strain BisA53).